We begin with the raw amino-acid sequence, 314 residues long: tRNA dimethylallyltransferase (314 aa).

9–16 (GPTAVGKT) serves as a coordination point for ATP. 11 to 16 (TAVGKT) is a binding site for substrate. Residues 34–37 (DSMQ) form an interaction with substrate tRNA region.

This sequence belongs to the IPP transferase family. Monomer. It depends on Mg(2+) as a cofactor.

It carries out the reaction adenosine(37) in tRNA + dimethylallyl diphosphate = N(6)-dimethylallyladenosine(37) in tRNA + diphosphate. Catalyzes the transfer of a dimethylallyl group onto the adenine at position 37 in tRNAs that read codons beginning with uridine, leading to the formation of N6-(dimethylallyl)adenosine (i(6)A). The protein is tRNA dimethylallyltransferase of Clostridium tetani (strain Massachusetts / E88).